Reading from the N-terminus, the 172-residue chain is Adenine phosphoribosyltransferase (172 aa).

The protein belongs to the purine/pyrimidine phosphoribosyltransferase family. In terms of assembly, homodimer.

It localises to the cytoplasm. The catalysed reaction is AMP + diphosphate = 5-phospho-alpha-D-ribose 1-diphosphate + adenine. It functions in the pathway purine metabolism; AMP biosynthesis via salvage pathway; AMP from adenine: step 1/1. Catalyzes a salvage reaction resulting in the formation of AMP, that is energically less costly than de novo synthesis. This chain is Adenine phosphoribosyltransferase, found in Prochlorococcus marinus (strain MIT 9211).